Consider the following 147-residue polypeptide: Hemoglobin subunit epsilon (147 aa).

In terms of domain architecture, Globin spans 3 to 147; the sequence is HFTAEEKSVI…VATALAHKYH (145 aa). Residue serine 51 is modified to Phosphoserine. The heme b site is built by histidine 64 and histidine 93.

Belongs to the globin family. As to expression, red blood cells.

Its function is as follows. Hemoglobin epsilon chain is a beta-type chain found in early embryos. This is Hemoglobin subunit epsilon (HBE1) from Sus scrofa (Pig).